The primary structure comprises 328 residues: D-cysteine desulfhydrase (328 aa).

Lys51 carries the N6-(pyridoxal phosphate)lysine modification.

Belongs to the ACC deaminase/D-cysteine desulfhydrase family. Homodimer. It depends on pyridoxal 5'-phosphate as a cofactor.

The catalysed reaction is D-cysteine + H2O = hydrogen sulfide + pyruvate + NH4(+) + H(+). Catalyzes the alpha,beta-elimination reaction of D-cysteine and of several D-cysteine derivatives. It could be a defense mechanism against D-cysteine. The chain is D-cysteine desulfhydrase from Shigella boydii serotype 18 (strain CDC 3083-94 / BS512).